We begin with the raw amino-acid sequence, 266 residues long: Undecaprenyl-diphosphatase (266 aa).

Transmembrane regions (helical) follow at residues 8–28 (VLALVQGLTEFLPISSAAHLI), 39–59 (QGLAFDVATHVGSLAAVVIYF), 87–107 (WAVGLGTIPAGLAGLLFHDII), 113–133 (SAQVIAMATIGFAVLLLFADV), 188–208 (SFLLSIPIIALAGGFEILGLV), 219–239 (MIVLGALVAGVSAYLCIHYFL), and 246–266 (TMLPFVIYRLVLGAFLLFLFW).

Belongs to the UppP family.

It localises to the cell inner membrane. The catalysed reaction is di-trans,octa-cis-undecaprenyl diphosphate + H2O = di-trans,octa-cis-undecaprenyl phosphate + phosphate + H(+). In terms of biological role, catalyzes the dephosphorylation of undecaprenyl diphosphate (UPP). Confers resistance to bacitracin. In Thioalkalivibrio sulfidiphilus (strain HL-EbGR7), this protein is Undecaprenyl-diphosphatase.